Here is a 448-residue protein sequence, read N- to C-terminus: N-succinylarginine dihydrolase (448 aa).

Substrate-binding positions include 19-28 (GGLSYGNVAS), asparagine 110, and 137-138 (HR). The active site involves glutamate 174. Residue arginine 214 coordinates substrate. The active site involves histidine 250. The substrate site is built by aspartate 252 and asparagine 365. Cysteine 371 functions as the Nucleophile in the catalytic mechanism.

This sequence belongs to the succinylarginine dihydrolase family. In terms of assembly, homodimer.

It carries out the reaction N(2)-succinyl-L-arginine + 2 H2O + 2 H(+) = N(2)-succinyl-L-ornithine + 2 NH4(+) + CO2. The protein operates within amino-acid degradation; L-arginine degradation via AST pathway; L-glutamate and succinate from L-arginine: step 2/5. In terms of biological role, catalyzes the hydrolysis of N(2)-succinylarginine into N(2)-succinylornithine, ammonia and CO(2). The polypeptide is N-succinylarginine dihydrolase (Pseudomonas savastanoi pv. phaseolicola (strain 1448A / Race 6) (Pseudomonas syringae pv. phaseolicola (strain 1448A / Race 6))).